A 205-amino-acid chain; its full sequence is Gap junction epsilon-1 protein (205 aa).

Residues 1–23 lie on the Cytoplasmic side of the membrane; sequence MSLNYIKNFYEGCVKPPTVIGQF. The helical transmembrane segment at 24-44 threads the bilayer; it reads HTLFFGSIRIFFLGVLGFAVY. Over 45-76 the chain is Extracellular; sequence GNEALHFICDPDKREVNLFCYNQFRPITPQVS. Cystine bridges form between cysteine 53/cysteine 161 and cysteine 64/cysteine 148. Residues 77–97 form a helical membrane-spanning segment; that stretch reads FSALQLVIVLVPGALFHLYAA. Residues 98–112 lie on the Cytoplasmic side of the membrane; the sequence is CKSINQECILQKPIY. A helical membrane pass occupies residues 113–133; sequence TIIYILSVLLRISLAAIAFWL. Residues 134–170 are Extracellular-facing; it reads QIYLFGFQVKSLYLCDARSLGENMIIRCMVPEHFEKT. The helical transmembrane segment at 171-191 threads the bilayer; sequence IFLIAINTFTTITILLFVAEI. Topologically, residues 192 to 205 are cytoplasmic; it reads FEIIFRRLYFPFRQ.

The protein belongs to the connexin family. Beta-type (group I) subfamily. As to quaternary structure, a connexon is composed of a hexamer of connexins. As to expression, not detected in lens or retina.

It is found in the cell membrane. Functionally, mediates calcium-independent ATP release, suggesting activity as a hemichannel. Does not form functional gap junctions. The chain is Gap junction epsilon-1 protein (GJE1) from Homo sapiens (Human).